The chain runs to 156 residues: Small ribosomal subunit protein uS7 (156 aa).

The protein belongs to the universal ribosomal protein uS7 family. In terms of assembly, part of the 30S ribosomal subunit. Contacts proteins S9 and S11.

Its function is as follows. One of the primary rRNA binding proteins, it binds directly to 16S rRNA where it nucleates assembly of the head domain of the 30S subunit. Is located at the subunit interface close to the decoding center, probably blocks exit of the E-site tRNA. The polypeptide is Small ribosomal subunit protein uS7 (Sphingopyxis alaskensis (strain DSM 13593 / LMG 18877 / RB2256) (Sphingomonas alaskensis)).